The following is a 644-amino-acid chain: Chaperone protein HscA (644 aa).

The protein belongs to the heat shock protein 70 family.

Chaperone involved in the maturation of iron-sulfur cluster-containing proteins. Has a low intrinsic ATPase activity which is markedly stimulated by HscB. Involved in the maturation of IscU. This Yersinia pseudotuberculosis serotype I (strain IP32953) protein is Chaperone protein HscA.